The chain runs to 159 residues: RNA pyrophosphohydrolase (159 aa).

A Nudix hydrolase domain is found at 6-149 (GFRPNVGIIL…KREVYRRALK (144 aa)). The short motif at 38 to 59 (GGINPDETPEDALYRELNEEVG) is the Nudix box element.

Belongs to the Nudix hydrolase family. RppH subfamily. A divalent metal cation is required as a cofactor.

In terms of biological role, accelerates the degradation of transcripts by removing pyrophosphate from the 5'-end of triphosphorylated RNA, leading to a more labile monophosphorylated state that can stimulate subsequent ribonuclease cleavage. The sequence is that of RNA pyrophosphohydrolase from Pseudomonas putida (strain ATCC 700007 / DSM 6899 / JCM 31910 / BCRC 17059 / LMG 24140 / F1).